The primary structure comprises 638 residues: Homeobox protein 10 (638 aa).

3 disordered regions span residues E23–N55, T76–N139, and I195–K219. Low complexity-rich tracts occupy residues T24–N55 and N80–N139. Positions E205 to G214 are enriched in polar residues. Positions N301 to G360 form a DNA-binding region, homeobox. 2 disordered regions span residues E381–D431 and S448–N638. Composition is skewed to low complexity over residues S388–G411, L419–S430, and N462–T501. Polar residues-rich tracts occupy residues S502–T522 and S545–Q573. Over residues N575–D625 the composition is skewed to low complexity.

The protein resides in the nucleus. Its function is as follows. Putative transcription factor. The polypeptide is Homeobox protein 10 (hbx10) (Dictyostelium discoideum (Social amoeba)).